A 701-amino-acid polypeptide reads, in one-letter code: Translation initiation factor IF-2 (701 aa).

Residues 48–62 are compositionally biased toward basic and acidic residues; it reads KIYKPEKAEQSEKSQ. A disordered region spans residues 48-123; the sequence is KIYKPEKAEQ…EPKEMPSKIT (76 aa). 2 stretches are compositionally biased toward low complexity: residues 63 to 89 and 97 to 109; these read QKNT…NNKP and NNKN…NNKQ. A compositionally biased stretch (basic and acidic residues) spans 110–119; the sequence is PKQEEPKEMP. A tr-type G domain is found at 203 to 372; that stretch reads ERPAVVTIMG…VLTSEVQELK (170 aa). The interval 212-219 is G1; sequence GHVDHGKT. Residue 212–219 participates in GTP binding; it reads GHVDHGKT. A G2 region spans residues 237 to 241; it reads GITQH. The tract at residues 258-261 is G3; the sequence is DTPG. GTP is bound by residues 258 to 262 and 312 to 315; these read DTPGH and NKID. The segment at 312–315 is G4; sequence NKID. Residues 348-350 form a G5 region; the sequence is SAL.

It belongs to the TRAFAC class translation factor GTPase superfamily. Classic translation factor GTPase family. IF-2 subfamily.

The protein resides in the cytoplasm. In terms of biological role, one of the essential components for the initiation of protein synthesis. Protects formylmethionyl-tRNA from spontaneous hydrolysis and promotes its binding to the 30S ribosomal subunits. Also involved in the hydrolysis of GTP during the formation of the 70S ribosomal complex. The sequence is that of Translation initiation factor IF-2 from Staphylococcus saprophyticus subsp. saprophyticus (strain ATCC 15305 / DSM 20229 / NCIMB 8711 / NCTC 7292 / S-41).